We begin with the raw amino-acid sequence, 174 residues long: Peptide deformylase (174 aa).

2 residues coordinate Fe cation: Cys-96 and His-138. Glu-139 is a catalytic residue. His-142 lines the Fe cation pocket.

Belongs to the polypeptide deformylase family. It depends on Fe(2+) as a cofactor.

It carries out the reaction N-terminal N-formyl-L-methionyl-[peptide] + H2O = N-terminal L-methionyl-[peptide] + formate. In terms of biological role, removes the formyl group from the N-terminal Met of newly synthesized proteins. Requires at least a dipeptide for an efficient rate of reaction. N-terminal L-methionine is a prerequisite for activity but the enzyme has broad specificity at other positions. In Helicobacter pylori (strain G27), this protein is Peptide deformylase.